The following is a 123-amino-acid chain: MPTSRPRGIHQGAAAEARAAAHLESLGREIVRRNYRIPGGEIDLVSREPGGTLVFTEVRQRRQARYGSALDSVTPRKLALMHRAALEYLTRECGRDDLPCRLEVLTIEGEADTGELRLLAVEG.

Belongs to the UPF0102 family.

The protein is UPF0102 protein DR_2282 of Deinococcus radiodurans (strain ATCC 13939 / DSM 20539 / JCM 16871 / CCUG 27074 / LMG 4051 / NBRC 15346 / NCIMB 9279 / VKM B-1422 / R1).